The following is a 105-amino-acid chain: UPF0145 protein lpg0197 (105 aa).

It belongs to the UPF0145 family.

The chain is UPF0145 protein lpg0197 from Legionella pneumophila subsp. pneumophila (strain Philadelphia 1 / ATCC 33152 / DSM 7513).